The sequence spans 809 residues: Protein TRC8 homolog (809 aa).

Transmembrane regions (helical) follow at residues 124 to 144, 147 to 167, 200 to 220, 233 to 253, 256 to 276, 350 to 370, 392 to 412, 425 to 445, 461 to 481, 488 to 508, and 539 to 559; these read TVKF…FMLW, HLVM…SYWS, VMSL…FAYI, MPII…AKVV, LPVV…MQSA, LVDG…ISMF, LGTV…LTSL, LCLL…PILM, ALSV…HLWS, WLLA…VSLA, and SVEF…LIFE. Residues 621-659 form an RING-type; atypical zinc finger; that stretch reads CAICYQEMYSAKITRCRHFFHGVCLRKWLYVQDRCPLCH. Disordered regions lie at residues 696–724 and 752–788; these read NNAA…SSSA and VASS…TSAA. Positions 711–724 are enriched in low complexity; sequence EASEQAPATSSSSA.

As to quaternary structure, interacts with VHL. Interacts with the MPN domain of CSN5. Interacts with EIF3F and EIF3H.

The protein resides in the endoplasmic reticulum membrane. Functionally, plays a role in growth inhibition that is dependent upon COP9 signalosome subunits CSN5 and CSN6. May modulate signalosome levels or compartmentalization. Probably functions in the same or a related pathway to VHL during early midline development. This is Protein TRC8 homolog from Drosophila melanogaster (Fruit fly).